The following is a 357-amino-acid chain: Glucose-6-phosphatase catalytic subunit 1 (357 aa).

Residues 1-28 (MEERMNVLHDFGIQSTRYLQVNYEDSQD) lie on the Lumenal side of the membrane. Residues 29-49 (WFVLVSVIADLRNAFYVLFPI) traverse the membrane as a helical segment. The Cytoplasmic segment spans residues 50 to 60 (WFHIQETVGIN). A helical transmembrane segment spans residues 61–81 (LLWVAVVGDWFNLVFKWILFG). Over 82 to 117 (QRPYWWVLDTDYYSNSSVPLIKQFPVTCETGPGSPS) the chain is Lumenal. R83 lines the substrate pocket. A glycan (N-linked (GlcNAc...) asparagine) is linked at N96. A helical transmembrane segment spans residues 118–138 (GHAMGTAGVYYVMVTSTLAIF). H119 (proton donor) is an active-site residue. The Cytoplasmic segment spans residues 139–147 (RGKKKSTYG). Residues 148–168 (FRCLNVVLWLGYWAVQLNVCL) traverse the membrane as a helical segment. At 169–170 (SR) the chain is on the lumenal side. R170 is a substrate binding site. The chain crosses the membrane as a helical span at residues 171-191 (IYLAAHFPHQVVAGVLSGIAV). H176 acts as the Nucleophile in catalysis. Residues 192–211 (AETFSHIRGIYNASLQRYCL) lie on the Cytoplasmic side of the membrane. The chain crosses the membrane as a helical span at residues 212-232 (ITFFLFGFALGFYLLLKGLGV). Over 233–254 (DLLWTLEKAKRWCERPEWVHLD) the chain is Lumenal. Residues 255–275 (TTPFASLFKNLGTLLGLGLAL) traverse the membrane as a helical segment. Over 276–291 (NSSMYRKSCKGELRKS) the chain is Cytoplasmic. Residues 292-312 (LPFRLACIVASLGLLHLFDSL) traverse the membrane as a helical segment. Residues 313–320 (KPPSQIES) are Lumenal-facing. A helical membrane pass occupies residues 321–341 (IFYILSFCKSATVPFASVSLI). Residues 342-357 (PYCLARLLGQTHKKSL) lie on the Cytoplasmic side of the membrane. The short motif at 354–357 (KKSL) is the Prevents secretion from ER element.

The protein belongs to the glucose-6-phosphatase family.

Its subcellular location is the endoplasmic reticulum membrane. The catalysed reaction is D-glucose 6-phosphate + H2O = D-glucose + phosphate. Its pathway is carbohydrate biosynthesis; gluconeogenesis. In terms of biological role, hydrolyzes glucose-6-phosphate to glucose in the endoplasmic reticulum. Forms with the glucose-6-phosphate transporter (SLC37A4/G6PT) the complex responsible for glucose production in the terminal step of glycogenolysis and gluconeogenesis. Hence, it is the key enzyme in homeostatic regulation of blood glucose levels. In Rattus norvegicus (Rat), this protein is Glucose-6-phosphatase catalytic subunit 1 (G6pc1).